Reading from the N-terminus, the 922-residue chain is MSRFKVSKFRHMEARPSRREAWISDIRAVTTPTCGNHIKSSCSLIAFNSDRPGVLGVISLEGHEENKRHVTYLGCHSDLVTDLDFSPFDDFLLASGSADRTIKLWRLSGTGEALPSVPGVVLGPEELPVEVLQFHPTVDGVLVSTAGKTVKVWDVAKQQPLTELEAHKDLVQSAVWSRDGAIVGTACKDKQLRIFDPRARTQASQSTQAHENNRDIRLAWTGIQEHLVSTGFNQMREREAKLWDTRLFSSALASVTLDTSPGPLIPLLDPDSGLLVLAGKGENQLYCYEVTPQQPALSPVTQCILENVLRGAALVPRRALAVMSCEVLQVLQLSDTAIIPISHHVPRKAVEFHEDLFPDTAGSVPASDAHMWWAGDNQQVQKVSLNPARRPHPCFTSSLVPTMEPAPDMVQPAEMPRADTDLSEGFSSPSSLMSPSTPSSLGPSLSSTSGIGTSPSQRSLQSLLGPSSKFRHTQGSLLHRDSHITNLKGLNLTTPGESDGFCANRLRVAVPLLSSGGQVAVLELQKPGRLPDTALPTLQNGTAVMDLVWDPFDPHRLAVAGEDARIRLWRVPPGGLENVLTTPETVLTGHTEKIYSLRFHPLAADVLASSSYDLTVRIWDLQTGAERLKLQGHQDQIFSLAWSPDGKQLATVCKDGHVRVYEPRSSPLPLQEGPGPEGGRGARIVWVCDGGCLLVSGFDSRSERQLQLYIADALAQGPSALLGLDVAPSTLLPSYDPDTGLVLLTGKGDTRVFLYEVLPEAPFFLECNSFTSPDPHKGFVLLPKTECDIQDVEFARCLRLRQTSLEPVAFRLPRVRKEFFQDDVFPDTAVTWEPALSAKAWFEGANGQPRLLSLQPPGMTPVSQAPREVPARRAPSSAQYLEEKSDQQKKEELLNAMVAKLGNREDPLPQDSFEGVDEDEWD.

WD repeat units follow at residues 75 to 115 (CHSD…EALP), 124 to 163 (PEEL…PLTE), 166 to 205 (AHKD…QASQ), and 209 to 253 (AHEN…SALA). The tract at residues 419–467 (DTDLSEGFSSPSSLMSPSTPSSLGPSLSSTSGIGTSPSQRSLQSLLGPS) is disordered. Low complexity predominate over residues 427-456 (SSPSSLMSPSTPSSLGPSLSSTSGIGTSPS). Residues serine 459 and serine 462 each carry the phosphoserine modification. A Glycyl lysine isopeptide (Lys-Gly) (interchain with G-Cter in ubiquitin) cross-link involves residue lysine 469. WD repeat units lie at residues 539–581 (QNGT…NVLT), 589–629 (GHTE…ERLK), 632–671 (GHQD…LPLQ), and 725–765 (DVAP…PFFL). The disordered stretch occupies residues 858–922 (GMTPVSQAPR…FEGVDEDEWD (65 aa)). A compositionally biased stretch (basic and acidic residues) spans 881 to 893 (LEEKSDQQKKEEL). Serine 912 is modified (phosphoserine).

It belongs to the WD repeat coronin family. In terms of assembly, interacts with clathrin adapter AP1 complex. This interaction takes place at Golgi membranes and not AP1-positive endosomal membranes. Interacts (when ubiquitinated at Lys-469) with EPS15. Post-translationally, the membrane-associated form is phosphorylated on tyrosine residues. Ubiquitinated via 'Lys-33'-linked ubiquitin chains by the BCR(KLHL20) E3 ubiquitin ligase complex: 'Lys-33'-linked ubiquitination promotes interaction with EPS15 and facilitates actin polymerization at the trans-Golgi network, thereby facilitating post-Golgi trafficking. Deubiquitinated by ZRANB1/TRABID. As to expression, in the adult, widely expressed with highest levels in brain, thymus and kidney and low levels in skeletal and heart muscle. Not expressed in lung. In the eye, strongly expressed in the outer plexiform layer of the retina. In the intestine, expressed both in terminally differentiated epithelial cells and in crypt epithelium. In the embryo, strongest expression is seen in brain, thymus, intestine, apical epidermal layers of the skin and developing lens fibers of the eye.

It is found in the golgi apparatus membrane. Its subcellular location is the golgi apparatus. The protein resides in the trans-Golgi network. It localises to the cytoplasmic vesicle. The protein localises to the cytoplasm. It is found in the cytosol. Its function is as follows. F-actin regulator involved in anterograde Golgi to endosome transport: upon ubiquitination via 'Lys-33'-linked ubiquitin chains by the BCR(KLHL20) E3 ubiquitin ligase complex, interacts with EPS15 and localizes to the trans-Golgi network, where it promotes actin polymerization, thereby facilitating post-Golgi trafficking. May play a role in the maintenance of the Golgi apparatus morphology. In Mus musculus (Mouse), this protein is Coronin-7 (Coro7).